A 261-amino-acid chain; its full sequence is Small ribosomal subunit protein eS1 (261 aa).

Positions 1–18 (MAVGKNKRISKGKKGGKK) are enriched in basic residues. The disordered stretch occupies residues 1-23 (MAVGKNKRISKGKKGGKKKAADP).

The protein belongs to the eukaryotic ribosomal protein eS1 family. Component of the small ribosomal subunit. Mature ribosomes consist of a small (40S) and a large (60S) subunit. The 40S subunit contains about 33 different proteins and 1 molecule of RNA (18S). The 60S subunit contains about 49 different proteins and 3 molecules of RNA (25S, 5.8S and 5S).

It is found in the cytoplasm. This chain is Small ribosomal subunit protein eS1 (cyc07), found in Nicotiana tabacum (Common tobacco).